Reading from the N-terminus, the 121-residue chain is Large ribosomal subunit protein uL18 (121 aa).

Belongs to the universal ribosomal protein uL18 family. As to quaternary structure, part of the 50S ribosomal subunit; part of the 5S rRNA/L5/L18/L25 subcomplex. Contacts the 5S and 23S rRNAs.

This is one of the proteins that bind and probably mediate the attachment of the 5S RNA into the large ribosomal subunit, where it forms part of the central protuberance. In Geobacter metallireducens (strain ATCC 53774 / DSM 7210 / GS-15), this protein is Large ribosomal subunit protein uL18.